The following is a 101-amino-acid chain: Small ribosomal subunit protein uS10 (101 aa).

The protein belongs to the universal ribosomal protein uS10 family. As to quaternary structure, part of the 30S ribosomal subunit.

In terms of biological role, involved in the binding of tRNA to the ribosomes. This chain is Small ribosomal subunit protein uS10, found in Cytophaga hutchinsonii (strain ATCC 33406 / DSM 1761 / CIP 103989 / NBRC 15051 / NCIMB 9469 / D465).